The primary structure comprises 378 residues: MAMTVNTNVSALVAQRHLNSASEMLNQSLERLSSGNRINSAKDDAAGLQISNRLETQMRGLGIAVRNANDGISIMQTAEGAMQETTQLLQRMRDLSLQSANGSNSAAERVALQEEMAALNDELNRIAETTSFAGRKLLNGQFMKASFQIGASSGEAVQLSLRNMRSDSLEMGGFSYVAAALADKQWQVTKGKQQLNISYVNAQGENENIQIQAKEGDDIEELATYINGKTDKVSASVNEKGQLQLYIAGKETSGTLSFSGSLANELQMNLLGYEAVDNLDISSAGGAQRAVSVIDTALKYVDGHRSELGAMQNRFQHAISNLDNVHENLAASNSRIKDADYAKETTQMIKQQILQQVSTSVLAQAKRQPKFVLFLLRN.

Coiled-coil stretches lie at residues 98–139 (QSAN…KLLN) and 311–339 (MQNR…IKDA).

Belongs to the bacterial flagellin family. In terms of assembly, heteromer of multiple flagellin subunits including FlaA, FlaB, FlaC, FlaD and FlaE.

It is found in the secreted. It localises to the bacterial flagellum. In terms of biological role, flagellin is the subunit protein which polymerizes to form the filaments of bacterial flagella. FlaE is not essential for flagellar synthesis and motility. The protein is Flagellin E (flaE) of Vibrio cholerae serotype O1 (strain ATCC 39541 / Classical Ogawa 395 / O395).